We begin with the raw amino-acid sequence, 806 residues long: ATP-dependent zinc metalloprotease FTSH 9, chloroplastic (806 aa).

The N-terminal 62 residues, 1 to 62 (MTSIELLSPL…SSIQLPQSVP (62 aa)), are a transit peptide targeting the chloroplast. The tract at residues 84-116 (SSRTIVNCQEGDQKASSSEGEGKTNKDKGRKQG) is disordered. 2 consecutive transmembrane segments (helical) span residues 133 to 153 (IIQA…MFVV) and 271 to 291 (GGFF…AGLL). Residue 369 to 376 (GLPGTGKT) participates in ATP binding. His-594 contributes to the Zn(2+) binding site. Glu-595 is an active-site residue. Residues His-598 and Asp-677 each coordinate Zn(2+).

The protein in the N-terminal section; belongs to the AAA ATPase family. This sequence in the C-terminal section; belongs to the peptidase M41 family. It depends on Zn(2+) as a cofactor.

It is found in the plastid. Its subcellular location is the chloroplast thylakoid membrane. In terms of biological role, probable ATP-dependent zinc metallopeptidase. This chain is ATP-dependent zinc metalloprotease FTSH 9, chloroplastic (FTSH9), found in Arabidopsis thaliana (Mouse-ear cress).